A 139-amino-acid polypeptide reads, in one-letter code: UPF0225 protein Bpro_4182 (139 aa).

The protein belongs to the UPF0225 family.

The chain is UPF0225 protein Bpro_4182 from Polaromonas sp. (strain JS666 / ATCC BAA-500).